Here is an 851-residue protein sequence, read N- to C-terminus: Venom phosphodiesterase 1 (851 aa).

Positions 1 to 23 are cleaved as a signal peptide; sequence MIQQKVLFISLVAVTLGLGLGLG. SMB domains follow at residues 30 to 73 and 74 to 118; these read PQVS…VLPT and QSWS…GETS. 16 disulfides stabilise this stretch: C34/C38, C34/C51, C38/C69, C49/C51, C49/C62, C55/C61, C62/C69, C78/C83, C78/C95, C83/C113, C93/C95, C93/C106, C99/C105, C106/C113, C124/C170, and C132/C344. N39 is a glycosylation site (N-linked (GlcNAc...) asparagine). The short motif at 58–60 is the Cell attachment site element; sequence RQA. The a divalent metal cation site is built by D147 and T185. The active-site AMP-threonine intermediate is the T185. N-linked (GlcNAc...) asparagine glycosylation is found at N216, N259, and N270. Position 271 (K271) interacts with AMP. Residues D305, H309, D352, and H353 each contribute to the a divalent metal cation site. Residue H309 participates in AMP binding. 6 disulfide bridges follow: C360-C457, C408-C793, C541-C599, C554-C654, C556-C639, and C762-C772. The N-linked (GlcNAc...) asparagine glycan is linked to N405. H462 contributes to the a divalent metal cation binding site. N-linked (GlcNAc...) asparagine glycans are attached at residues N512, N594, N674, and N745.

This sequence belongs to the nucleotide pyrophosphatase/phosphodiesterase family. Monomer cleaved in two subunits; disulfide-linked. Is synthesized as a single-chain protein and is subsequently cleaved to form a two-subunit protein held together with disulfide bonds. Requires a divalent metal cation as cofactor. As to expression, expressed by venom gland.

It localises to the secreted. It carries out the reaction ADP + H2O = AMP + phosphate + H(+). In terms of biological role, hydrolyzes ADP with high activity. Shows weak or no activity on 5'-AMP, 5'-GMP, 3'-AMP, ATP, cAMP, and cGMP. Is devoid of monophosphatase and proteinase activities. Dose-dependently inhibits platelet aggregation induced by ADP and collagen. The chain is Venom phosphodiesterase 1 from Crotalus adamanteus (Eastern diamondback rattlesnake).